We begin with the raw amino-acid sequence, 142 residues long: Mitochondrial import receptor subunit TOM22 homolog (142 aa).

Residues Met-1–Gly-11 show a composition bias toward low complexity. The segment at Met-1 to Leu-40 is disordered. The residue at position 2 (Ala-2) is an N-acetylalanine. Over Ala-2 to Arg-82 the chain is Cytoplasmic. Phosphoserine is present on Ser-15. Acidic residues predominate over residues Lys-27–Leu-40. The segment at Asp-41–Gly-50 is import sequence; necessary for mitochondrion outer membrane localization and integration in the TOM complex. Thr-43 is modified (phosphothreonine). Ser-45 carries the phosphoserine modification. A helical transmembrane segment spans residues Ala-83–Thr-103. Residues Ala-83–Thr-103 are TMD; necessary for mitochondrion outer membrane localization and integration in the TOM complex. Residues Glu-104–Ile-142 are Mitochondrial intermembrane-facing. Residues Pro-123–Ile-142 form a C-tail signal; necessary for mitochondrion outer membrane localization and integration in the TOM complex region.

This sequence belongs to the Tom22 family. Forms part of the preprotein translocase complex of the outer mitochondrial membrane (TOM complex) which consists of at least 7 different proteins (TOMM5, TOMM6, TOMM7, TOMM20, TOMM22, TOMM40 and TOMM70). Interacts with TOMM40. Interacts with PPP2R2B.

Its subcellular location is the mitochondrion outer membrane. In terms of biological role, central receptor component of the translocase of the outer membrane of mitochondria (TOM complex) responsible for the recognition and translocation of cytosolically synthesized mitochondrial preproteins. Together with the peripheral receptor TOM20 functions as the transit peptide receptor and facilitates the movement of preproteins into the translocation pore. Required for the translocation across the mitochondrial outer membrane of cytochrome P450 monooxygenases. The protein is Mitochondrial import receptor subunit TOM22 homolog (Tomm22) of Rattus norvegicus (Rat).